The primary structure comprises 119 residues: Thioredoxin H4 (119 aa).

The Thioredoxin domain maps to 2–115 (AAEEGQVIGC…LQAKIVKHTG (114 aa)). Residues cysteine 40 and cysteine 43 each act as nucleophile in the active site. An intrachain disulfide couples cysteine 40 to cysteine 43.

Belongs to the thioredoxin family. Plant H-type subfamily. Interacts with MDH1.

It is found in the cytoplasm. Functionally, thiol-disulfide oxidoreductase probably involved in the redox regulation of a number of cytosolic enzymes. Possesses insulin disulfide bonds reducing activity. This chain is Thioredoxin H4 (TRX4), found in Arabidopsis thaliana (Mouse-ear cress).